The chain runs to 55 residues: Serine protease inhibitor Kazal-type 1 (55 aa).

The region spanning 2-55 is the Kazal-like domain; it reads QGRDANCNYEFPGCPRNLEPVCGTDGNTYNNECLLCMENKKRDVPIRIQKDGPC. Cystine bridges form between C8–C37, C15–C34, and C23–C55.

It is found in the secreted. Functionally, serine protease inhibitor which exhibits anti-trypsin activity. In the pancreas, protects against trypsin-catalyzed premature activation of zymogens. In terms of biological role, in the male reproductive tract, binds to sperm heads where it modulates sperm capacitance by inhibiting calcium uptake and nitrogen oxide (NO) production. This is Serine protease inhibitor Kazal-type 1 (SPINK1) from Monodelphis domestica (Gray short-tailed opossum).